Here is a 495-residue protein sequence, read N- to C-terminus: Phosphomethylpyrimidine synthase (495 aa).

Substrate is bound by residues N125, M154, Y183, H219, S239 to G241, D280 to R283, and E319. H323 serves as a coordination point for Zn(2+). Position 346 (Y346) interacts with substrate. Zn(2+) is bound at residue H387. [4Fe-4S] cluster contacts are provided by C467, C470, and C475.

This sequence belongs to the ThiC family. It depends on [4Fe-4S] cluster as a cofactor.

It carries out the reaction 5-amino-1-(5-phospho-beta-D-ribosyl)imidazole + S-adenosyl-L-methionine = 4-amino-2-methyl-5-(phosphooxymethyl)pyrimidine + CO + 5'-deoxyadenosine + formate + L-methionine + 3 H(+). It functions in the pathway cofactor biosynthesis; thiamine diphosphate biosynthesis. Catalyzes the synthesis of the hydroxymethylpyrimidine phosphate (HMP-P) moiety of thiamine from aminoimidazole ribotide (AIR) in a radical S-adenosyl-L-methionine (SAM)-dependent reaction. The polypeptide is Phosphomethylpyrimidine synthase (Leptospira interrogans serogroup Icterohaemorrhagiae serovar copenhageni (strain Fiocruz L1-130)).